We begin with the raw amino-acid sequence, 103 residues long: uncharacterized protein (103 aa).

Residues 10–63 (FPECDHLKQIYDKCFTEFFQKFITPNYRHQYAVNPCERLHDVYKRCVEERLATQ) form the CHCH domain. 2 consecutive short sequence motifs (cx9C motif) follow at residues 13-23 (CDHLKQIYDKC) and 45-55 (CERLHDVYKRC). Intrachain disulfides connect Cys13–Cys55 and Cys23–Cys45. Basic and acidic residues predominate over residues 80-90 (TDDDKLKDRQN). A disordered region spans residues 80–103 (TDDDKLKDRQNNQKTNSENKCSSS). The span at 91–103 (NQKTNSENKCSSS) shows a compositional bias: polar residues.

It belongs to the TRIAP1/MDM35 family.

This is an uncharacterized protein from Caenorhabditis elegans.